The chain runs to 392 residues: Protein RecA (392 aa).

The segment at 1 to 21 (MALETKPAQDPATEIKHELDP) is disordered. Residue 83 to 90 (GPESSGKT) coordinates ATP. The segment at 372–392 (DAAKDTKATAAPAAKSSRAKA) is disordered. Over residues 379 to 392 (ATAAPAAKSSRAKA) the composition is skewed to low complexity.

The protein belongs to the RecA family.

The protein localises to the cytoplasm. Its function is as follows. Can catalyze the hydrolysis of ATP in the presence of single-stranded DNA, the ATP-dependent uptake of single-stranded DNA by duplex DNA, and the ATP-dependent hybridization of homologous single-stranded DNAs. It interacts with LexA causing its activation and leading to its autocatalytic cleavage. This Bifidobacterium breve protein is Protein RecA.